A 426-amino-acid polypeptide reads, in one-letter code: 3-phosphoshikimate 1-carboxyvinyltransferase (426 aa).

Lysine 22, serine 23, and arginine 27 together coordinate 3-phosphoshikimate. Lysine 22 lines the phosphoenolpyruvate pocket. Phosphoenolpyruvate-binding residues include glycine 96 and arginine 124. 3-phosphoshikimate-binding residues include serine 170, serine 171, glutamine 172, serine 198, aspartate 314, asparagine 337, and lysine 341. Glutamine 172 contributes to the phosphoenolpyruvate binding site. Aspartate 314 functions as the Proton acceptor in the catalytic mechanism. The phosphoenolpyruvate site is built by arginine 345, arginine 387, and lysine 412.

It belongs to the EPSP synthase family. As to quaternary structure, monomer.

The protein localises to the cytoplasm. It carries out the reaction 3-phosphoshikimate + phosphoenolpyruvate = 5-O-(1-carboxyvinyl)-3-phosphoshikimate + phosphate. The protein operates within metabolic intermediate biosynthesis; chorismate biosynthesis; chorismate from D-erythrose 4-phosphate and phosphoenolpyruvate: step 6/7. Catalyzes the transfer of the enolpyruvyl moiety of phosphoenolpyruvate (PEP) to the 5-hydroxyl of shikimate-3-phosphate (S3P) to produce enolpyruvyl shikimate-3-phosphate and inorganic phosphate. The protein is 3-phosphoshikimate 1-carboxyvinyltransferase of Shewanella sp. (strain ANA-3).